A 361-amino-acid polypeptide reads, in one-letter code: Histidinol-phosphate aminotransferase (361 aa).

K218 carries the post-translational modification N6-(pyridoxal phosphate)lysine.

This sequence belongs to the class-II pyridoxal-phosphate-dependent aminotransferase family. Histidinol-phosphate aminotransferase subfamily. In terms of assembly, homodimer. Pyridoxal 5'-phosphate serves as cofactor.

It catalyses the reaction L-histidinol phosphate + 2-oxoglutarate = 3-(imidazol-4-yl)-2-oxopropyl phosphate + L-glutamate. It functions in the pathway amino-acid biosynthesis; L-histidine biosynthesis; L-histidine from 5-phospho-alpha-D-ribose 1-diphosphate: step 7/9. This is Histidinol-phosphate aminotransferase from Dinoroseobacter shibae (strain DSM 16493 / NCIMB 14021 / DFL 12).